A 350-amino-acid polypeptide reads, in one-letter code: UDP-N-acetylenolpyruvoylglucosamine reductase (350 aa).

The region spanning 24–195 (HVDATARWLL…VAVEFNLPLL (172 aa)) is the FAD-binding PCMH-type domain. The active site involves Arg-172. Catalysis depends on Ser-245, which acts as the Proton donor. The active site involves Glu-342.

The protein belongs to the MurB family. FAD serves as cofactor.

It localises to the cytoplasm. It catalyses the reaction UDP-N-acetyl-alpha-D-muramate + NADP(+) = UDP-N-acetyl-3-O-(1-carboxyvinyl)-alpha-D-glucosamine + NADPH + H(+). It functions in the pathway cell wall biogenesis; peptidoglycan biosynthesis. Cell wall formation. This is UDP-N-acetylenolpyruvoylglucosamine reductase from Xanthomonas campestris pv. campestris (strain 8004).